A 456-amino-acid polypeptide reads, in one-letter code: Putative F-box/LRR-repeat protein At3g18150 (456 aa).

The F-box domain maps to Val-30–Tyr-78. LRR repeat units follow at residues Thr-177 to His-202, Cys-203 to Lys-213, Val-228 to Cys-253, Lys-278 to Gly-303, Ile-333 to Thr-358, and Cys-396 to Val-422.

The sequence is that of Putative F-box/LRR-repeat protein At3g18150 from Arabidopsis thaliana (Mouse-ear cress).